We begin with the raw amino-acid sequence, 195 residues long: Peptidyl-tRNA hydrolase (195 aa).

Tyr18 lines the tRNA pocket. His23 (proton acceptor) is an active-site residue. TRNA is bound by residues Phe69, Asn71, and Asn117.

This sequence belongs to the PTH family. As to quaternary structure, monomer.

Its subcellular location is the cytoplasm. It catalyses the reaction an N-acyl-L-alpha-aminoacyl-tRNA + H2O = an N-acyl-L-amino acid + a tRNA + H(+). Its function is as follows. Hydrolyzes ribosome-free peptidyl-tRNAs (with 1 or more amino acids incorporated), which drop off the ribosome during protein synthesis, or as a result of ribosome stalling. In terms of biological role, catalyzes the release of premature peptidyl moieties from peptidyl-tRNA molecules trapped in stalled 50S ribosomal subunits, and thus maintains levels of free tRNAs and 50S ribosomes. In Hahella chejuensis (strain KCTC 2396), this protein is Peptidyl-tRNA hydrolase.